Reading from the N-terminus, the 425-residue chain is Pyruvate dehydrogenase E1 component subunit alpha-3, chloroplastic (425 aa).

The N-terminal 66 residues, 1–66 (MAAASSFTAA…VLPGNKAAPA (66 aa)), are a transit peptide targeting the chloroplast. Residues H109, Y135, R136, A184, I186, D224, G225, and N253 each coordinate pyruvate. 8 residues coordinate thiamine diphosphate: Y135, R136, A184, I186, D224, G225, N253, and H322. Position 224 (D224) interacts with Mg(2+). N253 is a binding site for Mg(2+).

In terms of assembly, tetramer of 2 alpha and 2 beta subunits. Thiamine diphosphate serves as cofactor. It depends on Mg(2+) as a cofactor.

The protein resides in the plastid. It localises to the chloroplast. It catalyses the reaction N(6)-[(R)-lipoyl]-L-lysyl-[protein] + pyruvate + H(+) = N(6)-[(R)-S(8)-acetyldihydrolipoyl]-L-lysyl-[protein] + CO2. In terms of biological role, the pyruvate dehydrogenase complex catalyzes the overall conversion of pyruvate to acetyl-CoA and CO(2). It contains multiple copies of three enzymatic components: pyruvate dehydrogenase (E1), dihydrolipoamide acetyltransferase (E2) and lipoamide dehydrogenase (E3). This Oryza sativa subsp. japonica (Rice) protein is Pyruvate dehydrogenase E1 component subunit alpha-3, chloroplastic.